The sequence spans 333 residues: Taste receptor type 2 member 38 (333 aa).

Residues 1-17 (MLTLTHICTVSYEVRST) lie on the Extracellular side of the membrane. A helical transmembrane segment spans residues 18 to 38 (FLFISVLEFAVGFLTNAFISL). Topologically, residues 39–55 (VNFWDVVKRQPLSNSDC) are cytoplasmic. The chain crosses the membrane as a helical span at residues 56 to 76 (VLLCLSISRLFLHGLLFLSAI). Topologically, residues 77–94 (QLTHFQKLSEPLNHSYQV) are extracellular. The chain crosses the membrane as a helical span at residues 95-115 (ILMLWMIANQANLWLAACLSL). Topologically, residues 116–142 (LYCSKLIRFSHTFLICLASWVSRKISQ) are cytoplasmic. Residues 143–163 (MLLGIILCSCICTVLCVWCFF) form a helical membrane-spanning segment. Topologically, residues 164-190 (GRLHFTVTTVLFMNNNTRLNWQIKDLN) are extracellular. N178 carries an N-linked (GlcNAc...) asparagine glycan. Residues 191–211 (LFYSFLFCYLWSVPPFLLFLV) traverse the membrane as a helical segment. Topologically, residues 212-251 (SSGMLTVSLGRHMRTMKVYTRDSRDPSLEAHIKALKSLVS) are cytoplasmic. A helical transmembrane segment spans residues 252–272 (FFCFFVISSCAAFISVPLLIL). Topologically, residues 273–276 (WHDK) are extracellular. A helical transmembrane segment spans residues 277 to 297 (IGVMVCVGIMAACPSGHAAVL). Residues 298–333 (ISGNAKLRRAVTTILLWAQSSLKVRADHMADSRTLC) lie on the Cytoplasmic side of the membrane.

The protein belongs to the G-protein coupled receptor T2R family.

It localises to the membrane. Its function is as follows. Receptor that may play a role in the perception of bitterness and is gustducin-linked. May play a role in sensing the chemical composition of the gastrointestinal content. The activity of this receptor may stimulate alpha gustducin, mediate PLC-beta-2 activation and lead to the gating of TRPM5. This is Taste receptor type 2 member 38 (TAS2R38) from Papio hamadryas (Hamadryas baboon).